We begin with the raw amino-acid sequence, 247 residues long: T-cell surface glycoprotein CD8 alpha chain (247 aa).

The signal sequence occupies residues 1 to 27 (MASPLTRFLSLNLLLLGESIILGSGEA). The Ig-like V-type domain maps to 28–139 (KPQAPELRIF…SVISNSVMYF (112 aa)). Over 28–196 (KPQAPELRIF…TGLDFACDIY (169 aa)) the chain is Extracellular. The cysteines at positions 53 and 129 are disulfide-linked. N-linked (GlcNAc...) asparagine glycans are attached at residues N69, N97, and N150. Positions 156 to 182 (PVLRTPSPVHPTGTSQPQRPEDCRPRG) are disordered. Residues 197-217 (IWAPLAGICVALLLSLIITLI) traverse the membrane as a helical segment. At 218 to 247 (CYHRSRKRVCKCPRPLVRQEGKPRPSEKIV) the chain is on the cytoplasmic side.

Forms disulfide-linked heterodimers with CD8B at the cell surface. Also forms homodimers in several cell types including NK-cells or peripheral blood T-lymphocytes. Interacts with the MHC class I HLA-A/B2M dimer. Interacts with LCK in a zinc-dependent manner. In terms of processing, palmitoylated, but association with CD8B seems to be more important for the enrichment of CdD8A in lipid rafts. Phosphorylated in cytotoxic T-lymphocytes (CTLs) following activation.

Its subcellular location is the cell membrane. In terms of biological role, integral membrane glycoprotein that plays an essential role in the immune response and serves multiple functions in responses against both external and internal offenses. In T-cells, functions primarily as a coreceptor for MHC class I molecule:peptide complex. The antigens presented by class I peptides are derived from cytosolic proteins while class II derived from extracellular proteins. Interacts simultaneously with the T-cell receptor (TCR) and the MHC class I proteins presented by antigen presenting cells (APCs). In turn, recruits the Src kinase LCK to the vicinity of the TCR-CD3 complex. LCK then initiates different intracellular signaling pathways by phosphorylating various substrates ultimately leading to lymphokine production, motility, adhesion and activation of cytotoxic T-lymphocytes (CTLs). This mechanism enables CTLs to recognize and eliminate infected cells and tumor cells. In NK-cells, the presence of CD8A homodimers at the cell surface provides a survival mechanism allowing conjugation and lysis of multiple target cells. CD8A homodimer molecules also promote the survival and differentiation of activated lymphocytes into memory CD8 T-cells. This chain is T-cell surface glycoprotein CD8 alpha chain (Cd8a), found in Mus musculus (Mouse).